Here is a 417-residue protein sequence, read N- to C-terminus: D-glycerate 2-kinase (417 aa).

Belongs to the glycerate kinase type-1 family. In terms of assembly, homodimer. The cofactor is Mg(2+).

The enzyme catalyses (R)-glycerate + ATP = (2R)-2-phosphoglycerate + ADP + H(+). Involved in the degradation of serine via 3-hydroxypyruvate. Catalyzes the ATP-dependent phosphorylation of D-glycerate to 2-phosphoglycerate. This Thermotoga maritima (strain ATCC 43589 / DSM 3109 / JCM 10099 / NBRC 100826 / MSB8) protein is D-glycerate 2-kinase.